The primary structure comprises 446 residues: Protein adenylyltransferase FICD (446 aa).

The Cytoplasmic segment spans residues 1–18 (MAVTECEWASLGSRIGLR). Residues 19 to 39 (AALVLLSGSLLVVLFPLSGLE) traverse the membrane as a helical; Signal-anchor for type II membrane protein segment. Over 40–446 (HQYRTALNIL…ECKQTITIKT (407 aa)) the chain is Lumenal. 2 TPR repeats span residues 94–127 (AKAA…DPDH) and 128–161 (VDAL…SPHN). An Inhibitory (S/T)XXXE(G/N) motif motif is present at residues 218–223 (TVAIEG). Glu222 provides a ligand contact to ATP. N-linked (GlcNAc...) asparagine glycosylation is present at Asn263. The 136-residue stretch at 273 to 408 (VTIDNILEIH…VRPFIRFIAK (136 aa)) folds into the Fido domain. 304 to 307 (VGHH) provides a ligand contact to ATP. His351 is an active-site residue. Residues 355–362 (DGNGRTSR), 387–388 (YY), and Asn395 each bind ATP.

The protein belongs to the fic family. As to quaternary structure, homodimer. Requires Mg(2+) as cofactor. It depends on Mn(2+) as a cofactor.

It is found in the endoplasmic reticulum membrane. It carries out the reaction L-tyrosyl-[protein] + ATP = O-(5'-adenylyl)-L-tyrosyl-[protein] + diphosphate. It catalyses the reaction 3-O-(5'-adenylyl)-L-threonyl-[protein] + H2O = L-threonyl-[protein] + AMP + H(+). The enzyme catalyses L-threonyl-[protein] + ATP = 3-O-(5'-adenylyl)-L-threonyl-[protein] + diphosphate. The side chain of Glu-222 determines which of the two opposing activities (AMPylase or de-AMPylase) will take place. In response to endoplasmic reticulum stress, mediates de-AMPylase activity. Adenylyltransferase activity is inhibited by the inhibitory helix present at the N-terminus: Glu-222 binds ATP and competes with ATP-binding at Arg-362, thereby preventing adenylyltransferase activity. In unstressed cells, disengagement of Glu-222 promotes adenylyltransferase activity. Activation dissociates ATP-binding from Glu-222, allowing ordered binding of the entire ATP moiety with the alpha-phosphate in an orientation that is productive for accepting an incoming target hydroxyl side chain. In terms of biological role, protein that can both mediate the addition of adenosine 5'-monophosphate (AMP) to specific residues of target proteins (AMPylation), and the removal of the same modification from target proteins (de-AMPylation), depending on the context. The side chain of Glu-222 determines which of the two opposing activities (AMPylase or de-AMPylase) will take place. Acts as a key regulator of the ERN1/IRE1-mediated unfolded protein response (UPR) by mediating AMPylation or de-AMPylation of HSPA5/BiP. In unstressed cells, acts as an adenylyltransferase by mediating AMPylation of HSPA5/BiP at 'Thr-518', thereby inactivating it. In response to endoplasmic reticulum stress, acts as a phosphodiesterase by mediating removal of ATP (de-AMPylation) from HSPA5/BiP at 'Thr-518', leading to restore HSPA5/BiP activity. This is Protein adenylyltransferase FICD from Xenopus tropicalis (Western clawed frog).